The following is a 577-amino-acid chain: Glycine--tRNA ligase (577 aa).

Residues arginine 98 and glutamate 164 each coordinate substrate. ATP-binding positions include 196-198 (RNE), 206-211 (IRLREF), 328-329 (EC), and 451-454 (GIDR). 211 to 215 (FTQAE) contacts substrate. Residue 447–451 (EPSYG) participates in substrate binding.

This sequence belongs to the class-II aminoacyl-tRNA synthetase family.

It is found in the cytoplasm. The catalysed reaction is tRNA(Gly) + glycine + ATP = glycyl-tRNA(Gly) + AMP + diphosphate. Functionally, catalyzes the attachment of glycine to tRNA(Gly). The chain is Glycine--tRNA ligase from Methanocaldococcus jannaschii (strain ATCC 43067 / DSM 2661 / JAL-1 / JCM 10045 / NBRC 100440) (Methanococcus jannaschii).